We begin with the raw amino-acid sequence, 988 residues long: Ubiquitin carboxyl-terminal hydrolase 36 (988 aa).

Residues 16 to 55 (PTLRTDNNGARKQAEHPNNQSHHNHPHPTSNPNELPKPKR) form a disordered region. The span at 31-48 (HPNNQSHHNHPHPTSNPN) shows a compositional bias: low complexity. One can recognise a USP domain in the interval 78 to 386 (TGMINVGNTC…NAYIMFFELD (309 aa)). C87 serves as the catalytic Nucleophile. H345 functions as the Proton acceptor in the catalytic mechanism. 3 disordered regions span residues 393–422 (PPAN…SPSP), 483–782 (ATSA…VTSN), and 868–988 (EQRQ…QQQT). Composition is skewed to low complexity over residues 408-422 (STTP…SPSP) and 490-509 (NGNK…KSIN). S419 and S421 each carry phosphoserine. The span at 532-544 (TTAQLPSMPNMTE) shows a compositional bias: polar residues. Phosphothreonine occurs at positions 561 and 565. A phosphoserine mark is found at S575 and S577. Residues 592 to 601 (EGEDFSESDQ) are compositionally biased toward acidic residues. Residues 602-631 (ESGQTNGHSKTNGSLTNGSASSSVHVNNSK) show a composition bias toward polar residues. Residues 632–649 (QKTDAIDEIFKSLKKSAD) are compositionally biased toward basic and acidic residues. The residue at position 650 (S650) is a Phosphoserine. The span at 650-659 (SEEDDDEEEP) shows a compositional bias: acidic residues. Residues 669–679 (PQKQSQSQSKA) are compositionally biased toward low complexity. Residues 680-689 (PPSPKTPPSP) are compositionally biased toward pro residues. S682 carries the post-translational modification Phosphoserine. T685 is modified (phosphothreonine). A Phosphoserine modification is found at S688. The span at 707–717 (VDAIDDDDDAV) shows a compositional bias: acidic residues. Residue T728 is modified to Phosphothreonine. Polar residues predominate over residues 735–747 (NPFSSSKPSTDSP). At S746 the chain carries Phosphoserine. Residue T749 is modified to Phosphothreonine. Over residues 762–782 (ALKSHQQPRVGNGYQSNVTSN) the composition is skewed to polar residues. Low complexity-rich tracts occupy residues 892–903 (SGSAKGNNASNS) and 930–943 (RFHN…FQQR).

It belongs to the peptidase C19 family. In terms of assembly, interacts with atms/PAF1, but not with CycT.

It localises to the nucleus. The protein localises to the nucleolus. The enzyme catalyses Thiol-dependent hydrolysis of ester, thioester, amide, peptide and isopeptide bonds formed by the C-terminal Gly of ubiquitin (a 76-residue protein attached to proteins as an intracellular targeting signal).. Required for maintaining multiple types of adult stem cells, including male and female germline, epithelial follicle cell and intestinal stem cells. May function as a transcriptional repressor by continually deubiquiting histone H2B at the promoters of genes critical for cellular differentiation, thereby preventing histone H3 'Lys-4' trimethylation (H3K4). Controls selective autophagy activation by ubiquitinated proteins. This Drosophila simulans (Fruit fly) protein is Ubiquitin carboxyl-terminal hydrolase 36 (Usp36).